Consider the following 188-residue polypeptide: Elongation factor P (188 aa).

The protein belongs to the elongation factor P family.

The protein resides in the cytoplasm. It functions in the pathway protein biosynthesis; polypeptide chain elongation. Its function is as follows. Involved in peptide bond synthesis. Stimulates efficient translation and peptide-bond synthesis on native or reconstituted 70S ribosomes in vitro. Probably functions indirectly by altering the affinity of the ribosome for aminoacyl-tRNA, thus increasing their reactivity as acceptors for peptidyl transferase. This Saccharopolyspora erythraea (strain ATCC 11635 / DSM 40517 / JCM 4748 / NBRC 13426 / NCIMB 8594 / NRRL 2338) protein is Elongation factor P.